Here is a 448-residue protein sequence, read N- to C-terminus: uncharacterized protein (448 aa).

Polar residues predominate over residues P428–D440. A disordered region spans residues P428–G448.

This is an uncharacterized protein from Mycoplasma pneumoniae (strain ATCC 29342 / M129 / Subtype 1) (Mycoplasmoides pneumoniae).